The following is a 308-amino-acid chain: MEKHIPVLLKESIEYLNIKENGIYVDCTLGRAGHSSEILKKLKDGKLFSIDQDETAILEGTEKLTKISNNFKILEGNFVNISAMLAMQGIFEVDGILYDLGVSSPQFDVAERGFSYRFDGPLDMRMDRANNSLTAHKIVNEYTQEELEQILWNYGDEKFARSIAKNIILSRPINTTFELVSVIKKSLPAKILKQQKHPAKKTFQALRIRVNNEMETLESSLEQSLNLLKPKGRVVVITFHSLEEKVVKNIFKKYTLDEQQFYLSNLPYEIESSKDFKLLFKKPLKPTNTEVENNNRSHSAKLWVIEKK.

S-adenosyl-L-methionine is bound by residues Ala32–His34, Asp51, Phe78, Asp99, and Gln106.

Belongs to the methyltransferase superfamily. RsmH family.

It is found in the cytoplasm. It catalyses the reaction cytidine(1402) in 16S rRNA + S-adenosyl-L-methionine = N(4)-methylcytidine(1402) in 16S rRNA + S-adenosyl-L-homocysteine + H(+). Functionally, specifically methylates the N4 position of cytidine in position 1402 (C1402) of 16S rRNA. In Mesoplasma florum (strain ATCC 33453 / NBRC 100688 / NCTC 11704 / L1) (Acholeplasma florum), this protein is Ribosomal RNA small subunit methyltransferase H.